Consider the following 201-residue polypeptide: Large ribosomal subunit protein uL4 (201 aa).

The segment at Ala-45 to Gly-71 is disordered.

This sequence belongs to the universal ribosomal protein uL4 family. As to quaternary structure, part of the 50S ribosomal subunit.

Functionally, one of the primary rRNA binding proteins, this protein initially binds near the 5'-end of the 23S rRNA. It is important during the early stages of 50S assembly. It makes multiple contacts with different domains of the 23S rRNA in the assembled 50S subunit and ribosome. Its function is as follows. Forms part of the polypeptide exit tunnel. The chain is Large ribosomal subunit protein uL4 from Shewanella loihica (strain ATCC BAA-1088 / PV-4).